The chain runs to 1291 residues: Cytoplasmic FMR1-interacting protein (1291 aa).

The disordered stretch occupies residues 1270-1291 (PSVISSSSHYQDPQKLRQSINN). The span at 1271-1291 (SVISSSSHYQDPQKLRQSINN) shows a compositional bias: polar residues.

The protein belongs to the CYFIP family. In terms of assembly, interacts with Fmr1 and Rac1. Component of the WAVE complex composed of Hem/Kette, Scar/Wave and Cyfip where it binds through its C-terminus directly to Hem. In the embryo, expressed mainly in the gut and in the developing central nervous system where high levels of expression are found in the CNS neuropile. Expression in the gut diminishes as development proceeds (at protein level). In the adult, expressed specifically in the nervous system.

Its subcellular location is the cytoplasm. Plays a role in guidance and morphology of central and peripheral axons and in synaptic morphology. Also required for formation of cell membrane protrusions and for bristle development. Plays a role in regulating mitochondrial activity, energy metabolism and membrane potential which maintains normal gamma-aminobutyric acid (GABA) signaling and ensures normal social behavior. The chain is Cytoplasmic FMR1-interacting protein from Drosophila melanogaster (Fruit fly).